The primary structure comprises 304 residues: Calmodulin-lysine N-methyltransferase (304 aa).

Belongs to the class I-like SAM-binding methyltransferase superfamily. CLNMT methyltransferase family. In terms of assembly, monomer. Expressed in discreet spatial and tissue-specific patterns including root tips, leaves-tips, floral buds, stamens, hydathodes, stigma, anther, siliques, apical meristems and germinating seeds. Also observed at high levels in the root stele region.

The protein resides in the cytoplasm. Its subcellular location is the nucleus. The enzyme catalyses [calmodulin]-L-lysine + S-adenosyl-L-methionine = [calmodulin]-N(6)-methyl-L-lysine + S-adenosyl-L-homocysteine + H(+). Its function is as follows. Catalyzes the trimethylation of calmodulin. Regulates roots development probably by modulating auxin signaling responses. May be involved in gravitropism. Involved in abscisic acid (ABA)-mediated and abiotic stress responses, including salt (NaCl), cold, drought and heat stresses. This Arabidopsis thaliana (Mouse-ear cress) protein is Calmodulin-lysine N-methyltransferase.